We begin with the raw amino-acid sequence, 138 residues long: ATP synthase epsilon chain (138 aa).

Belongs to the ATPase epsilon chain family. In terms of assembly, F-type ATPases have 2 components, CF(1) - the catalytic core - and CF(0) - the membrane proton channel. CF(1) has five subunits: alpha(3), beta(3), gamma(1), delta(1), epsilon(1). CF(0) has three main subunits: a, b and c.

Its subcellular location is the cell inner membrane. Functionally, produces ATP from ADP in the presence of a proton gradient across the membrane. This chain is ATP synthase epsilon chain, found in Geobacter metallireducens (strain ATCC 53774 / DSM 7210 / GS-15).